We begin with the raw amino-acid sequence, 513 residues long: GMP synthase [glutamine-hydrolyzing] (513 aa).

One can recognise a Glutamine amidotransferase type-1 domain in the interval 3–192 (TVVVLDYGSQ…VSKVAKMEKN (190 aa)). C80 acts as the Nucleophile in catalysis. Catalysis depends on residues H166 and E168. A GMPS ATP-PPase domain is found at 193–388 (WKMTDFIEEK…LGLPDEMINR (196 aa)). 220 to 226 (SGGVDSS) is a binding site for ATP.

Homodimer.

It catalyses the reaction XMP + L-glutamine + ATP + H2O = GMP + L-glutamate + AMP + diphosphate + 2 H(+). The protein operates within purine metabolism; GMP biosynthesis; GMP from XMP (L-Gln route): step 1/1. Functionally, catalyzes the synthesis of GMP from XMP. The polypeptide is GMP synthase [glutamine-hydrolyzing] (Thermosipho africanus (strain TCF52B)).